Here is a 516-residue protein sequence, read N- to C-terminus: 2-isopropylmalate synthase (516 aa).

Positions 5–267 (IIIFDTTLRD…STDINIKEIH (263 aa)) constitute a Pyruvate carboxyltransferase domain. Residues aspartate 14, histidine 202, histidine 204, and asparagine 238 each coordinate Mn(2+). A regulatory domain region spans residues 393–516 (KLEYFDVQSK…VNKELERLQK (124 aa)).

The protein belongs to the alpha-IPM synthase/homocitrate synthase family. LeuA type 1 subfamily. Homodimer. The cofactor is Mn(2+).

Its subcellular location is the cytoplasm. It carries out the reaction 3-methyl-2-oxobutanoate + acetyl-CoA + H2O = (2S)-2-isopropylmalate + CoA + H(+). It functions in the pathway amino-acid biosynthesis; L-leucine biosynthesis; L-leucine from 3-methyl-2-oxobutanoate: step 1/4. In terms of biological role, catalyzes the condensation of the acetyl group of acetyl-CoA with 3-methyl-2-oxobutanoate (2-ketoisovalerate) to form 3-carboxy-3-hydroxy-4-methylpentanoate (2-isopropylmalate). The sequence is that of 2-isopropylmalate synthase from Buchnera aphidicola subsp. Cinara cedri (strain Cc).